The chain runs to 490 residues: Betaine aldehyde dehydrogenase (490 aa).

Position 93 (Asp-93) interacts with K(+). Residue 150–152 (GAW) participates in NAD(+) binding. The active-site Charge relay system is the Lys-162. 176 to 179 (KPSE) is a binding site for NAD(+). Val-180 is a K(+) binding site. 230 to 233 (GIAS) is an NAD(+) binding site. Leu-246 is a binding site for K(+). Glu-252 functions as the Proton acceptor in the catalytic mechanism. 3 residues coordinate NAD(+): Gly-254, Cys-286, and Glu-387. Cys-286 acts as the Nucleophile in catalysis. Cys-286 carries the cysteine sulfenic acid (-SOH) modification. Positions 457 and 460 each coordinate K(+). The active-site Charge relay system is Glu-464.

It belongs to the aldehyde dehydrogenase family. Dimer of dimers. K(+) serves as cofactor.

The enzyme catalyses betaine aldehyde + NAD(+) + H2O = glycine betaine + NADH + 2 H(+). The protein operates within amine and polyamine biosynthesis; betaine biosynthesis via choline pathway; betaine from betaine aldehyde: step 1/1. In terms of biological role, involved in the biosynthesis of the osmoprotectant glycine betaine. Catalyzes the irreversible oxidation of betaine aldehyde to the corresponding acid. The sequence is that of Betaine aldehyde dehydrogenase from Pectobacterium atrosepticum (strain SCRI 1043 / ATCC BAA-672) (Erwinia carotovora subsp. atroseptica).